The chain runs to 431 residues: Glutamate--tRNA ligase 1 (431 aa).

A 'HIGH' region motif is present at residues 6–16; it reads PSPTGDMHIGN. Residues 235–239 carry the 'KMSKS' region motif; that stretch reads KMSKR. Lys-238 is a binding site for ATP.

This sequence belongs to the class-I aminoacyl-tRNA synthetase family. Glutamate--tRNA ligase type 1 subfamily. As to quaternary structure, monomer.

The protein resides in the cytoplasm. The enzyme catalyses tRNA(Glu) + L-glutamate + ATP = L-glutamyl-tRNA(Glu) + AMP + diphosphate. Its function is as follows. Catalyzes the attachment of glutamate to tRNA(Glu) in a two-step reaction: glutamate is first activated by ATP to form Glu-AMP and then transferred to the acceptor end of tRNA(Glu). This is Glutamate--tRNA ligase 1 from Campylobacter jejuni subsp. jejuni serotype O:6 (strain 81116 / NCTC 11828).